Here is a 347-residue protein sequence, read N- to C-terminus: uncharacterized protein (347 aa).

The protein localises to the cytoplasm. Its subcellular location is the nucleus. This is an uncharacterized protein from Schizosaccharomyces pombe (strain 972 / ATCC 24843) (Fission yeast).